A 167-amino-acid polypeptide reads, in one-letter code: Ribonuclease H (167 aa).

Residues 1–143 (MYKQIEIFTD…CDQLARKAAK (143 aa)) enclose the RNase H type-1 domain. Residues Asp10, Glu48, Asp70, and Asp135 each coordinate Mg(2+).

Belongs to the RNase H family. Monomer. The cofactor is Mg(2+).

The protein localises to the cytoplasm. The enzyme catalyses Endonucleolytic cleavage to 5'-phosphomonoester.. Its function is as follows. Endonuclease that specifically degrades the RNA of RNA-DNA hybrids. This Blochmanniella floridana protein is Ribonuclease H.